The sequence spans 249 residues: MAPSRKFFVGGNWKMNGRKNNLGELINTLNAAKVPADTEVVCAPPTAYIDFARQKLDPKIAVAAQNCYKVANGAFTGEISPGMIKDLGATWVVLGHSERRHVFGESDELIGQKVAHALAEGLGVIACIGEKLDEREAGITEKVVFEQTKVIADNVKDWSKVVLAYEPVWAIGTGKTATPQQAQEVHEKLRGWLKSNVSDAVAQSARIIYGGSVTGATCKELASQPDVDGFLVGGASLKPEFVDIINAKQ.

Substrate contacts are provided by Asn12 and Lys14. An N6-acetyllysine modification is found at Lys14. Tyr68 carries the 3'-nitrotyrosine modification. A Phosphoserine modification is found at Ser80. Residue His96 is the Electrophile of the active site. Ser106 is modified (phosphoserine). Residue Lys142 forms a Glycyl lysine isopeptide (Lys-Gly) (interchain with G-Cter in SUMO1) linkage. Residue Lys149 is modified to N6-succinyllysine. N6-acetyllysine; alternate is present on Lys156. Residue Lys156 is modified to N6-succinyllysine; alternate. At Ser159 the chain carries Phosphoserine. Glu166 functions as the Proton acceptor in the catalytic mechanism. The residue at position 173 (Thr173) is a Phosphothreonine. Lys194 carries the post-translational modification N6-acetyllysine; alternate. Lys194 carries the N6-succinyllysine; alternate modification. Position 194 is an N6-methyllysine; alternate (Lys194). At Ser198 the chain carries Phosphoserine. A 3'-nitrotyrosine modification is found at Tyr209. Phosphoserine is present on Ser212. Phosphothreonine is present on Thr214. Position 223 is a phosphoserine (Ser223). Lys238 is subject to N6-acetyllysine.

Belongs to the triosephosphate isomerase family. In terms of assembly, homodimer.

The protein resides in the cytoplasm. The enzyme catalyses dihydroxyacetone phosphate = methylglyoxal + phosphate. It carries out the reaction D-glyceraldehyde 3-phosphate = dihydroxyacetone phosphate. It participates in carbohydrate degradation; glycolysis; D-glyceraldehyde 3-phosphate from glycerone phosphate: step 1/1. It functions in the pathway carbohydrate biosynthesis; gluconeogenesis. Triosephosphate isomerase is an extremely efficient metabolic enzyme that catalyzes the interconversion between dihydroxyacetone phosphate (DHAP) and D-glyceraldehyde-3-phosphate (G3P) in glycolysis and gluconeogenesis. Its function is as follows. It is also responsible for the non-negligible production of methylglyoxal a reactive cytotoxic side-product that modifies and can alter proteins, DNA and lipids. The polypeptide is Triosephosphate isomerase (TPI1) (Bos taurus (Bovine)).